A 388-amino-acid chain; its full sequence is Chorismate synthase (388 aa).

NADP(+) is bound by residues Arg-39 and Arg-45. Residues 130–132 (RSS), 251–252 (NA), Gly-296, 311–315 (KPIPT), and Arg-337 each bind FMN.

Belongs to the chorismate synthase family. As to quaternary structure, homotetramer. The cofactor is FMNH2.

The enzyme catalyses 5-O-(1-carboxyvinyl)-3-phosphoshikimate = chorismate + phosphate. It functions in the pathway metabolic intermediate biosynthesis; chorismate biosynthesis; chorismate from D-erythrose 4-phosphate and phosphoenolpyruvate: step 7/7. Functionally, catalyzes the anti-1,4-elimination of the C-3 phosphate and the C-6 proR hydrogen from 5-enolpyruvylshikimate-3-phosphate (EPSP) to yield chorismate, which is the branch point compound that serves as the starting substrate for the three terminal pathways of aromatic amino acid biosynthesis. This reaction introduces a second double bond into the aromatic ring system. This chain is Chorismate synthase, found in Streptococcus mutans serotype c (strain ATCC 700610 / UA159).